Consider the following 386-residue polypeptide: 3-ketoacyl-CoA thiolase (386 aa).

Catalysis depends on cysteine 91, which acts as the Acyl-thioester intermediate. Active-site proton acceptor residues include histidine 342 and cysteine 372.

It belongs to the thiolase-like superfamily. Thiolase family. In terms of assembly, heterotetramer of two alpha chains (FadB) and two beta chains (FadA).

It localises to the cytoplasm. The catalysed reaction is an acyl-CoA + acetyl-CoA = a 3-oxoacyl-CoA + CoA. It participates in lipid metabolism; fatty acid beta-oxidation. Catalyzes the final step of fatty acid oxidation in which acetyl-CoA is released and the CoA ester of a fatty acid two carbons shorter is formed. This chain is 3-ketoacyl-CoA thiolase, found in Colwellia psychrerythraea (strain 34H / ATCC BAA-681) (Vibrio psychroerythus).